The following is a 127-amino-acid chain: Small ribosomal subunit protein uS11 (127 aa).

The protein belongs to the universal ribosomal protein uS11 family. Part of the 30S ribosomal subunit. Interacts with proteins S7 and S18. Binds to IF-3.

In terms of biological role, located on the platform of the 30S subunit, it bridges several disparate RNA helices of the 16S rRNA. Forms part of the Shine-Dalgarno cleft in the 70S ribosome. This Ruthia magnifica subsp. Calyptogena magnifica protein is Small ribosomal subunit protein uS11.